A 388-amino-acid chain; its full sequence is Cytochrome b (388 aa).

4 consecutive transmembrane segments (helical) span residues 38-58, 82-104, 119-139, and 185-205; these read FGCL…FLAM, WLLR…LHIF, VWCL…IGYV, and FFSL…LHLA. Histidine 88 and histidine 102 together coordinate heme b. 2 residues coordinate heme b: histidine 189 and histidine 203. Histidine 208 lines the a ubiquinone pocket. 4 helical membrane-spanning segments follow: residues 231 to 251, 295 to 315, 327 to 347, and 354 to 373; these read FYVK…IWIF, AGGV…PFFK, IHQG…WIGC, and FVTI…AITP.

The protein belongs to the cytochrome b family. The main subunits of complex b-c1 are: cytochrome b, cytochrome c1 and the Rieske protein. Heme b is required as a cofactor.

Its subcellular location is the mitochondrion inner membrane. Functionally, component of the ubiquinol-cytochrome c reductase complex (complex III or cytochrome b-c1 complex) that is part of the mitochondrial respiratory chain. The b-c1 complex mediates electron transfer from ubiquinol to cytochrome c. Contributes to the generation of a proton gradient across the mitochondrial membrane that is then used for ATP synthesis. This Zea mays (Maize) protein is Cytochrome b (MT-CYB).